The sequence spans 228 residues: NAD(P)H-hydrate epimerase (228 aa).

One can recognise a YjeF N-terminal domain in the interval 10 to 214 (AIDIDQELFN…DLERKYDLKI (205 aa)). Position 58–62 (58–62 (NNGGD)) interacts with (6S)-NADPHX. The K(+) site is built by asparagine 59 and aspartate 123. (6S)-NADPHX-binding positions include 127 to 133 (GFSFKPP) and aspartate 156. Residue serine 159 participates in K(+) binding.

This sequence belongs to the NnrE/AIBP family. It depends on K(+) as a cofactor.

The catalysed reaction is (6R)-NADHX = (6S)-NADHX. The enzyme catalyses (6R)-NADPHX = (6S)-NADPHX. Its function is as follows. Catalyzes the epimerization of the S- and R-forms of NAD(P)HX, a damaged form of NAD(P)H that is a result of enzymatic or heat-dependent hydration. This is a prerequisite for the S-specific NAD(P)H-hydrate dehydratase to allow the repair of both epimers of NAD(P)HX. This Pediculus humanus subsp. corporis (Body louse) protein is NAD(P)H-hydrate epimerase.